Consider the following 337-residue polypeptide: BRI1 kinase inhibitor 1 (337 aa).

Polar residues predominate over residues 1-25 (METNLQQVKNSSQTFSEKQNPKQEA). 2 disordered regions span residues 1-38 (METN…SSPS) and 51-72 (SSSS…SSYQ). Over residues 26–38 (SPSPISSTCSSPS) the composition is skewed to low complexity. Position 211 is a phosphotyrosine (Y211). Residues 270 to 310 (SAPASMRTSPTNSGHLRVSTAGLSSSSGSTSSSSSDSTMEE) are disordered. Positions 288 to 310 (STAGLSSSSGSTSSSSSDSTMEE) are enriched in low complexity.

As to quaternary structure, interacts (via C-terminus) with BRI1 (via kinase domain). In terms of processing, phosphorylated on Tyr-211 in response to brassinosteroid perception, leading to its inactivation: once phosphorylated, displaced into the cytosol where it is inactive. As to expression, expressed in leaves, petioles, shoot apices, hypocotyls, roots and flowers.

The protein localises to the cell membrane. The protein resides in the cytoplasm. In terms of biological role, negative regulator of brassinosteroid signaling. When associated to the membrane, limits the interaction of BRI1 with BAK1 by binding to the kinase-inactive form of BRI1. The sequence is that of BRI1 kinase inhibitor 1 (BKI1) from Arabidopsis thaliana (Mouse-ear cress).